The following is a 268-amino-acid chain: MLNTGLRKGLALSPITHLLKRCSSVTDNVHRVNYCYNYHTVPNLSQRNLLPLFSPEALDIAWDQHQRQVVKELNDRVKGTELEDSSVFNIIFQTAALPEHAATFQFASQAYNNHFFFQSLIGKRAADAKKNSKYEANAAINKAVNENFGSKENLLSKIHELASNSFGACWLWIVIDDYNRLNLLRTFQAGSPYLWTRWQSNDPHLISSVPDYSARPRKYAHVPILNLCLWNHAYYKDYGLLNRSRYIDTWFDCIDWSVIEERLTNSLV.

The transit peptide at methionine 1–serine 23 directs the protein to the mitochondrion.

The protein belongs to the mitochondrion-specific ribosomal protein mS43 family. Component of the mitochondrial small ribosomal subunit (mt-SSU). Mature yeast 74S mitochondrial ribosomes consist of a small (37S) and a large (54S) subunit. The 37S small subunit contains a 15S ribosomal RNA (15S mt-rRNA) and at least 32 different proteins. The 54S large subunit contains a 21S rRNA (21S mt-rRNA) and at least 45 different proteins. mS43 forms a dimer with mS42, building a large protuberance adjacent to the mRNA channel exit in the mt-SSU body.

The protein localises to the mitochondrion. Functionally, component of the mitochondrial ribosome (mitoribosome), a dedicated translation machinery responsible for the synthesis of mitochondrial genome-encoded proteins, including at least some of the essential transmembrane subunits of the mitochondrial respiratory chain. The mitoribosomes are attached to the mitochondrial inner membrane and translation products are cotranslationally integrated into the membrane. The sequence is that of Small ribosomal subunit protein mS43 from Schizosaccharomyces pombe (strain 972 / ATCC 24843) (Fission yeast).